We begin with the raw amino-acid sequence, 571 residues long: Probable serine/threonine-protein kinase WNK4 (571 aa).

One can recognise a Protein kinase domain in the interval 19 to 277 (GRFAEILGRG…AKELLQDPFL (259 aa)). Residues 99–102 (TELF) and lysine 149 contribute to the ATP site. Aspartate 166 functions as the Proton acceptor in the catalytic mechanism. Residues 396–425 (EDDETPHDHHRHRTDSFHSSSSHASSSQAS) are disordered. The segment covering 412–425 (FHSSSSHASSSQAS) has biased composition (low complexity). Residue serine 522 is modified to Phosphoserine.

This sequence belongs to the protein kinase superfamily. Ser/Thr protein kinase family. WNK subfamily.

The enzyme catalyses L-seryl-[protein] + ATP = O-phospho-L-seryl-[protein] + ADP + H(+). It carries out the reaction L-threonyl-[protein] + ATP = O-phospho-L-threonyl-[protein] + ADP + H(+). May regulate flowering time by modulating the photoperiod pathway. This is Probable serine/threonine-protein kinase WNK4 (WNK4) from Arabidopsis thaliana (Mouse-ear cress).